Consider the following 384-residue polypeptide: Trophoblast glycoprotein-like (384 aa).

The N-terminal stretch at 1–30 is a signal peptide; it reads MAPRAGQRGLWSPLPGLLLLAAALSRPAAP. Disulfide bonds link cysteine 31/cysteine 37 and cysteine 35/cysteine 47. The Extracellular segment spans residues 31–309; sequence CPFQCYCFGS…DVAGPELEAS (279 aa). LRR repeat units lie at residues 61–84, 95–118, 119–142, 173–196, and 198–219; these read PPDA…AFAG, LPLL…AFDG, LPSL…AFRG, LAEL…ALRL, and RLEQ…ELSA. Residue asparagine 66 is glycosylated (N-linked (GlcNAc...) asparagine). 2 disulfides stabilise this stretch: cysteine 240–cysteine 266 and cysteine 242–cysteine 287. A helical membrane pass occupies residues 310–330; that stretch reads YVFFGLVLALIGLIFLMVLYL. The Cytoplasmic segment spans residues 331–384; sequence NRRGIQRWMHNLREACRDQMEGYHYRYEQDADPRRAPAPAAPAGSRATSPGSGL. Positions 361-384 are disordered; sequence ADPRRAPAPAAPAGSRATSPGSGL. The span at 367–384 shows a compositional bias: low complexity; that stretch reads PAPAAPAGSRATSPGSGL.

It is found in the membrane. In Mus musculus (Mouse), this protein is Trophoblast glycoprotein-like (Tpbgl).